The following is a 53-amino-acid chain: UPF0391 membrane protein PA5482 (53 aa).

Transmembrane regions (helical) follow at residues 4 to 24 (WAIT…GGIA) and 29 to 49 (GIAK…FFFG).

This sequence belongs to the UPF0391 family.

It localises to the cell membrane. This is UPF0391 membrane protein PA5482 from Pseudomonas aeruginosa (strain ATCC 15692 / DSM 22644 / CIP 104116 / JCM 14847 / LMG 12228 / 1C / PRS 101 / PAO1).